The chain runs to 315 residues: tRNA dimethylallyltransferase (315 aa).

10 to 17 provides a ligand contact to ATP; it reads GPTATGKS. A substrate-binding site is contributed by 12 to 17; it reads TATGKS. The interval 35 to 38 is interaction with substrate tRNA; the sequence is DSMQ.

Belongs to the IPP transferase family. In terms of assembly, monomer. Requires Mg(2+) as cofactor.

The catalysed reaction is adenosine(37) in tRNA + dimethylallyl diphosphate = N(6)-dimethylallyladenosine(37) in tRNA + diphosphate. Functionally, catalyzes the transfer of a dimethylallyl group onto the adenine at position 37 in tRNAs that read codons beginning with uridine, leading to the formation of N6-(dimethylallyl)adenosine (i(6)A). This chain is tRNA dimethylallyltransferase, found in Caldanaerobacter subterraneus subsp. tengcongensis (strain DSM 15242 / JCM 11007 / NBRC 100824 / MB4) (Thermoanaerobacter tengcongensis).